Here is a 273-residue protein sequence, read N- to C-terminus: Undecaprenyl-diphosphatase (273 aa).

Transmembrane regions (helical) follow at residues 4–24 (LILI…FLPI), 43–63 (KAQV…CWEY), 82–102 (FVLN…LFIK), 108–128 (LFHP…ILWA), 183–203 (AAEF…FYDV), 217–237 (MFVV…RGFI), and 253–273 (IGFG…WSAG).

This sequence belongs to the UppP family.

It is found in the cell inner membrane. The enzyme catalyses di-trans,octa-cis-undecaprenyl diphosphate + H2O = di-trans,octa-cis-undecaprenyl phosphate + phosphate + H(+). Its function is as follows. Catalyzes the dephosphorylation of undecaprenyl diphosphate (UPP). Confers resistance to bacitracin. In Nitrosomonas eutropha (strain DSM 101675 / C91 / Nm57), this protein is Undecaprenyl-diphosphatase.